We begin with the raw amino-acid sequence, 401 residues long: S-adenosylmethionine synthase (401 aa).

136-141 lines the ATP pocket; that stretch reads GQGSVD.

Belongs to the AdoMet synthase 2 family. The cofactor is Mg(2+).

It catalyses the reaction L-methionine + ATP + H2O = S-adenosyl-L-methionine + phosphate + diphosphate. Its pathway is amino-acid biosynthesis; S-adenosyl-L-methionine biosynthesis; S-adenosyl-L-methionine from L-methionine: step 1/1. Catalyzes the formation of S-adenosylmethionine from methionine and ATP. In Pyrococcus furiosus (strain ATCC 43587 / DSM 3638 / JCM 8422 / Vc1), this protein is S-adenosylmethionine synthase.